The chain runs to 255 residues: Tabinhibitin 2 (255 aa).

An N-terminal signal peptide occupies residues 1–23; it reads MISILVSRFLLAALVLQYATIDA. The short motif at 32-34 is the Cell attachment site element; sequence RGD. The SCP domain occupies 67–211; that stretch reads LSKINDVRDH…KARALLTCNF (145 aa).

The protein belongs to the CRISP family. In terms of tissue distribution, expressed in salivary glands.

It localises to the secreted. Functionally, inhibits platelet aggregation induced by all agonists tested (ADP, arachidonic acid, the thromboxane A2 analog U46619, thrombin, and snake venom snaclecs (TMVA that activates platelet through GPIB, and stejnulxin that specifically acts through GPVI (GP6))). May act by competing with fibrinogen for binding to glycoprotein IIb/IIIa (ITGA2B/ITGB3). The chain is Tabinhibitin 2 from Tabanus yao (Horsefly).